An 819-amino-acid polypeptide reads, in one-letter code: Leucine--tRNA ligase (819 aa).

The 'HIGH' region motif lies at 40–51 (PYPSGAGLHVGH). The short motif at 600-604 (KMSKS) is the 'KMSKS' region element. Residue Lys-603 participates in ATP binding.

It belongs to the class-I aminoacyl-tRNA synthetase family.

The protein localises to the cytoplasm. It catalyses the reaction tRNA(Leu) + L-leucine + ATP = L-leucyl-tRNA(Leu) + AMP + diphosphate. The sequence is that of Leucine--tRNA ligase from Chlamydia muridarum (strain MoPn / Nigg).